A 513-amino-acid chain; its full sequence is GMP synthase [glutamine-hydrolyzing] (513 aa).

In terms of domain architecture, Glutamine amidotransferase type-1 spans 8–198 (KIIVLDYGSQ…ALNICGAKGN (191 aa)). Residue C85 is the Nucleophile of the active site. Active-site residues include H172 and E174. Residues 199-388 (WSMENFIDMQ…LGMPDEIVWR (190 aa)) form the GMPS ATP-PPase domain. 226–232 (SGGVDSS) serves as a coordination point for ATP.

Homodimer.

The catalysed reaction is XMP + L-glutamine + ATP + H2O = GMP + L-glutamate + AMP + diphosphate + 2 H(+). The protein operates within purine metabolism; GMP biosynthesis; GMP from XMP (L-Gln route): step 1/1. Its function is as follows. Catalyzes the synthesis of GMP from XMP. The polypeptide is GMP synthase [glutamine-hydrolyzing] (guaA) (Lactococcus lactis subsp. cremoris (strain MG1363)).